A 922-amino-acid chain; its full sequence is GPI inositol-deacylase (922 aa).

The Cytoplasmic portion of the chain corresponds to 1–11 (MFLHSVNLWNL). Residues 12–32 (AFYVFMVFLATLGLWDVFFGF) form a helical membrane-spanning segment. Residues 33–597 (EENKCSMSYM…GQVVRFHGGA (565 aa)) lie on the Lumenal side of the membrane. Serine 174 is a catalytic residue. Residues asparagine 363, asparagine 402, and asparagine 558 are each glycosylated (N-linked (GlcNAc...) asparagine). Residues 598–618 (LPAYVVSSILLAYGGQLYSLL) form a helical membrane-spanning segment. The Cytoplasmic segment spans residues 619 to 641 (STGFCLEYGTMLDKEAKPYKVDP). Residues 642-662 (FVIMIKFLLGYKWFKELWDAV) traverse the membrane as a helical segment. At 663 to 668 (LLPELD) the chain is on the lumenal side. The helical transmembrane segment at 669 to 689 (AIVLTSQSMCFPLVSLILFLF) threads the bilayer. Over 690-694 (GTCTA) the chain is Cytoplasmic. A helical transmembrane segment spans residues 695–715 (YWSGLLSSASVQLLSSLWLAL). Residues 716–733 (KRPAELPKDVKVMSPDLP) are Lumenal-facing. Residues 734 to 754 (VLTVVFLIISWTTCGALAILL) form a helical membrane-spanning segment. The Cytoplasmic segment spans residues 755–816 (SYLYYVFKVV…NDAEDSLRMH (62 aa)). The segment at 776–801 (NQPVNPKHSRRSEKKSNHHKDSAIQN) is disordered. Basic residues predominate over residues 782 to 793 (KHSRRSEKKSNH). Residues 817–837 (STVINLLTWVVLLSMPSLIYW) traverse the membrane as a helical segment. The Lumenal portion of the chain corresponds to 838 to 853 (SKNLRYYFKLNPDPCK). A helical membrane pass occupies residues 854–874 (PLAFLLIPAIAVLGNTHTVSI). Over 875–894 (KSSKLLKTASQFPLPLAVGV) the chain is Cytoplasmic. A helical transmembrane segment spans residues 895–915 (IAFGSSHLYRVPCFVIIPLVF). The Lumenal segment spans residues 916-922 (HSLCNFM).

It belongs to the GPI inositol-deacylase family.

It is found in the endoplasmic reticulum membrane. Its function is as follows. GPI inositol-deacylase that catalyzes the remove of the acyl chain linked to the 2-OH position of inositol ring from the GPI-anchored protein (GPI-AP) in the endoplasmic reticulum. Initiates the post-attachment remodeling phase of GPI-AP biogenesis and participates in endoplasmic reticulum (ER)-to-Golgi transport of GPI-anchored protein. The sequence is that of GPI inositol-deacylase from Rattus norvegicus (Rat).